The following is a 222-amino-acid chain: Phosphoglycolate phosphatase (222 aa).

The active-site Nucleophile is the aspartate 12. Mg(2+)-binding residues include aspartate 12, aspartate 14, and aspartate 175.

It belongs to the HAD-like hydrolase superfamily. CbbY/CbbZ/Gph/YieH family. The cofactor is Mg(2+).

The catalysed reaction is 2-phosphoglycolate + H2O = glycolate + phosphate. It functions in the pathway organic acid metabolism; glycolate biosynthesis; glycolate from 2-phosphoglycolate: step 1/1. Functionally, specifically catalyzes the dephosphorylation of 2-phosphoglycolate. Is involved in the dissimilation of the intracellular 2-phosphoglycolate formed during the DNA repair of 3'-phosphoglycolate ends, a major class of DNA lesions induced by oxidative stress. This Chromobacterium violaceum (strain ATCC 12472 / DSM 30191 / JCM 1249 / CCUG 213 / NBRC 12614 / NCIMB 9131 / NCTC 9757 / MK) protein is Phosphoglycolate phosphatase.